The sequence spans 43 residues: Cytochrome b559 subunit beta (43 aa).

Residues W18–A34 traverse the membrane as a helical segment. H22 serves as a coordination point for heme.

This sequence belongs to the PsbE/PsbF family. Heterodimer of an alpha subunit and a beta subunit. PSII is composed of 1 copy each of membrane proteins PsbA, PsbB, PsbC, PsbD, PsbE, PsbF, PsbH, PsbI, PsbJ, PsbK, PsbL, PsbM, PsbT, PsbX, PsbY, PsbZ, Psb30/Ycf12, at least 3 peripheral proteins of the oxygen-evolving complex and a large number of cofactors. It forms dimeric complexes. Requires heme b as cofactor.

It localises to the plastid. The protein resides in the chloroplast thylakoid membrane. In terms of biological role, this b-type cytochrome is tightly associated with the reaction center of photosystem II (PSII). PSII is a light-driven water:plastoquinone oxidoreductase that uses light energy to abstract electrons from H(2)O, generating O(2) and a proton gradient subsequently used for ATP formation. It consists of a core antenna complex that captures photons, and an electron transfer chain that converts photonic excitation into a charge separation. This chain is Cytochrome b559 subunit beta, found in Stigeoclonium helveticum (Green alga).